A 304-amino-acid chain; its full sequence is Ribosomal RNA large subunit methyltransferase F (304 aa).

This sequence belongs to the methyltransferase superfamily. METTL16/RlmF family.

The protein resides in the cytoplasm. The enzyme catalyses adenosine(1618) in 23S rRNA + S-adenosyl-L-methionine = N(6)-methyladenosine(1618) in 23S rRNA + S-adenosyl-L-homocysteine + H(+). Functionally, specifically methylates the adenine in position 1618 of 23S rRNA. This is Ribosomal RNA large subunit methyltransferase F from Klebsiella pneumoniae subsp. pneumoniae (strain ATCC 700721 / MGH 78578).